The sequence spans 91 residues: Uteroglobin (91 aa).

The signal sequence occupies residues 1–21 (MKLAITITLAILALCCSPASA).

Belongs to the secretoglobin family. As to quaternary structure, antiparallel homodimer; disulfide-linked. Interaction with LMBR1L is controversial. In terms of tissue distribution, club cells (nonciliated cells of the surface epithelium of the pulmonary airways). Expressed in lung, uterus, and prostate.

Its subcellular location is the secreted. Functionally, binds phosphatidylcholine, phosphatidylinositol, polychlorinated biphenyls (PCB) and weakly progesterone, potent inhibitor of phospholipase A2. This chain is Uteroglobin (SCGB1A1), found in Equus caballus (Horse).